Reading from the N-terminus, the 101-residue chain is Ubiquitin-related modifier 1 (101 aa).

Glycine 101 bears the 1-thioglycine mark. Glycine 101 participates in a covalent cross-link: Glycyl lysine isopeptide (Gly-Lys) (interchain with K-? in acceptor proteins).

Belongs to the URM1 family. In terms of processing, C-terminal thiocarboxylation occurs in 2 steps, it is first acyl-adenylated (-COAMP) via the hesA/moeB/thiF part of UBA4, then thiocarboxylated (-COSH) via the rhodanese domain of UBA4.

It localises to the cytoplasm. It functions in the pathway tRNA modification; 5-methoxycarbonylmethyl-2-thiouridine-tRNA biosynthesis. Functionally, acts as a sulfur carrier required for 2-thiolation of mcm(5)S(2)U at tRNA wobble positions of cytosolic tRNA(Lys), tRNA(Glu) and tRNA(Gln). Serves as sulfur donor in tRNA 2-thiolation reaction by being thiocarboxylated (-COSH) at its C-terminus by the MOCS3 homolog UBA4. The sulfur is then transferred to tRNA to form 2-thiolation of mcm(5)S(2)U. Prior mcm(5) tRNA modification by the elongator complex is required for 2-thiolation. Also acts as a ubiquitin-like protein (UBL) that is covalently conjugated via an isopeptide bond to lysine residues of target proteins such as AHP1. The thiocarboxylated form serves as substrate for conjugation and oxidative stress specifically induces the formation of UBL-protein conjugates. The chain is Ubiquitin-related modifier 1 from Scheffersomyces stipitis (strain ATCC 58785 / CBS 6054 / NBRC 10063 / NRRL Y-11545) (Yeast).